A 482-amino-acid chain; its full sequence is MFS-type transporter cnsL (482 aa).

A helical membrane pass occupies residues 73 to 93 (LFVCATLSGLDKTAISAAAVY). N-linked (GlcNAc...) asparagine glycosylation is present at asparagine 100. Transmembrane regions (helical) follow at residues 108-128 (WIGSAPFFGGLLFMGPLAYCL), 131-151 (VPAVPFFAFNVLCWGILEMSV), 170-190 (IILNVVAPIINGFVAWVVGYY), 199-219 (IIFLLVGALTIVTSVVVYFVL), 304-324 (LLAMPPGAMSTLSGIGLSYLA), 333-353 (AIVTVSILLPLFGAVLCYALP), 361-381 (LVGLYILYTYWAPYVTLVSVY), 392-412 (ITLYAWFYIAWATGNIIGPQT), and 426-446 (VAMIICYVVAMFAITAYGVVC).

This sequence belongs to the major facilitator superfamily. Allantoate permease family.

The protein resides in the cell membrane. Functionally, MFS-type transporter; part of the gene cluster that mediates the biosynthesis of communesins, a prominent class of indole alkaloids with great potential as pharmaceuticals. With the MFS transporter cnsO, is most likely responsible for cummunesins secretion and thereby may contribute to intrinsic resistance. The protein is MFS-type transporter cnsL of Penicillium expansum (Blue mold rot fungus).